A 1116-amino-acid polypeptide reads, in one-letter code: Ubiquitin C-terminal hydrolase 12 (1116 aa).

The segment covering 1-10 (MTMMTPPPVD) has biased composition (pro residues). The tract at residues 1–52 (MTMMTPPPVDQPEDEEMLVPNSDLVDGPAQPMEVTQPETAASTVENQPAEDP) is disordered. Residues 36–46 (QPETAASTVEN) show a composition bias toward polar residues. Residues 54-179 (TLKFTWTIPN…NDTVLVEAEV (126 aa)) form the MATH domain. Positions 199–524 (VGLKNQGATC…NAYMLVYIRE (326 aa)) constitute a USP domain. Cys208 acts as the Nucleophile in catalysis. Catalysis depends on His455, which acts as the Proton acceptor.

It belongs to the peptidase C19 family. Interacts with SIC/RON3.

It carries out the reaction Thiol-dependent hydrolysis of ester, thioester, amide, peptide and isopeptide bonds formed by the C-terminal Gly of ubiquitin (a 76-residue protein attached to proteins as an intracellular targeting signal).. In terms of biological role, recognizes and hydrolyzes the peptide bond at the C-terminal Gly of ubiquitin. Involved in the processing of poly-ubiquitin precursors as well as that of ubiquitinated proteins. Positive regulator of root meristem development that, together with UBP13, prevents the ubiquitination and turnover of RGFR1 induced by the RGF1 hormone peptide, thus influencing PLT1 and PLT2 expression. The sequence is that of Ubiquitin C-terminal hydrolase 12 from Arabidopsis thaliana (Mouse-ear cress).